The sequence spans 723 residues: Nucleolar protein 11 (723 aa).

It localises to the nucleus. The protein resides in the nucleolus. Functionally, ribosome biogenesis factor. May be required for both optimal rDNA transcription and pre-rRNA processing. This chain is Nucleolar protein 11 (NOL11), found in Gallus gallus (Chicken).